Consider the following 85-residue polypeptide: Large ribosomal subunit protein bL27 (85 aa).

The segment at 1–20 (MAHKKAGGSTRNGRDSEAKR) is disordered.

The protein belongs to the bacterial ribosomal protein bL27 family.

The chain is Large ribosomal subunit protein bL27 from Cronobacter sakazakii (strain ATCC BAA-894) (Enterobacter sakazakii).